A 162-amino-acid chain; its full sequence is Endoribonuclease YbeY (162 aa).

H118, H122, and H128 together coordinate Zn(2+).

Belongs to the endoribonuclease YbeY family. It depends on Zn(2+) as a cofactor.

The protein localises to the cytoplasm. Its function is as follows. Single strand-specific metallo-endoribonuclease involved in late-stage 70S ribosome quality control and in maturation of the 3' terminus of the 16S rRNA. In Caulobacter sp. (strain K31), this protein is Endoribonuclease YbeY.